Consider the following 523-residue polypeptide: Occludin (523 aa).

Positions 1 to 20 (MSVRPFESPPPYRPDEFKPN) are disordered. Residues 1–66 (MSVRPFESPP…KWTSPPGVIR (66 aa)) lie on the Cytoplasmic side of the membrane. Positions 60–269 (SPPGVIRILS…IIVFAVKTRR (210 aa)) constitute an MARVEL domain. Residues 67–87 (ILSMLVIVMCIAVFACVASTL) form a helical membrane-spanning segment. The Extracellular portion of the chain corresponds to 88–140 (AWDRAYGTGIFGGSMNYPYGSGFGSYGGGFGGYGYGYGYGYGGYTDPRAAKGF). Residues 141-161 (LLAMAAFCFIASLVIFVTSVI) form a helical membrane-spanning segment. Residues 162–173 (RSGMSRTRRYYL) lie on the Cytoplasmic side of the membrane. The chain crosses the membrane as a helical span at residues 174 to 194 (IVIIVSAILGIMVFIATIVYI). The Extracellular segment spans residues 195–244 (MGVNPTAQASGSMYGSQIYTICSQFYTPGGTGLYVDQYLYHYCVVDPQEA). An intrachain disulfide couples Cys-216 to Cys-237. The helical transmembrane segment at 245–265 (IAIVLGFMIIVAFALIIVFAV) threads the bilayer. Residues 266–523 (KTRRKMDRYD…MVGDYDRRKT (258 aa)) lie on the Cytoplasmic side of the membrane. Ser-302 bears the Phosphoserine mark. The disordered stretch occupies residues 302–338 (SAGTQDMPPPPSDYAERVDSPMAYSSNGKVNGKRSYP). At Thr-305 the chain carries Phosphothreonine. Residues Ser-313, Ser-321, Ser-340, and Ser-360 each carry the phosphoserine modification. The interval 363-408 (DFRQPRYSSNDNLETPSKRTPTKGKAGKAKRTDPDHYETDYTTGGE) is disordered. Residues 368–381 (RYSSNDNLETPSKR) are compositionally biased toward polar residues. Phosphotyrosine is present on Tyr-369. A phosphoserine mark is found at Ser-370 and Ser-371. Basic residues predominate over residues 382–391 (TPTKGKAGKA). The segment covering 392–401 (KRTDPDHYET) has biased composition (basic and acidic residues). Residues Tyr-399 and Tyr-403 each carry the phosphotyrosine modification. Phosphothreonine; by PKC/PRKCH occurs at positions 404 and 405. Ser-409 carries the post-translational modification Phosphoserine. The OCEL domain occupies 415–523 (EDWLREYPPI…MVGDYDRRKT (109 aa)). Positions 433–489 (YKRNFDAGLQEYKSLLAELDEVNKELSRLDRELDDYREESEEYMAAADEYNRLKQVK) form a coiled coil. At Ser-491 the chain carries Phosphoserine.

The protein belongs to the ELL/occludin family. In terms of assembly, interacts with TJP1/ZO1. Interacts with VAPA. Interacts with CLDN1, CLDN6, CLDN9, CLDN11, CLDN12 and CLDN17. Interacts with PLSCR1. Interacts with LSR, ILDR1 and ILDR2. Interacts with TJP2/ZO2. Post-translationally, dephosphorylated by PTPRJ.

Its subcellular location is the cell membrane. The protein resides in the cell junction. It is found in the tight junction. Its function is as follows. May play a role in the formation and regulation of the tight junction (TJ) paracellular permeability barrier. May be involved in the organization of actin in endothelial cells. This is Occludin (Ocln) from Rattus norvegicus (Rat).